The following is a 160-amino-acid chain: UPF0225 protein PputW619_1140 (160 aa).

Belongs to the UPF0225 family.

The polypeptide is UPF0225 protein PputW619_1140 (Pseudomonas putida (strain W619)).